The following is a 157-amino-acid chain: NADPH-dependent 7-cyano-7-deazaguanine reductase (157 aa).

Catalysis depends on cysteine 56, which acts as the Thioimide intermediate. Aspartate 63 serves as the catalytic Proton donor. Substrate-binding positions include 78 to 80 (VES) and 97 to 98 (HE).

It belongs to the GTP cyclohydrolase I family. QueF type 1 subfamily.

The protein resides in the cytoplasm. The catalysed reaction is 7-aminomethyl-7-carbaguanine + 2 NADP(+) = 7-cyano-7-deazaguanine + 2 NADPH + 3 H(+). Its pathway is tRNA modification; tRNA-queuosine biosynthesis. Its function is as follows. Catalyzes the NADPH-dependent reduction of 7-cyano-7-deazaguanine (preQ0) to 7-aminomethyl-7-deazaguanine (preQ1). In Parabacteroides distasonis (strain ATCC 8503 / DSM 20701 / CIP 104284 / JCM 5825 / NCTC 11152), this protein is NADPH-dependent 7-cyano-7-deazaguanine reductase.